Reading from the N-terminus, the 122-residue chain is Large ribosomal subunit protein uL14 (122 aa).

Belongs to the universal ribosomal protein uL14 family. As to quaternary structure, part of the 50S ribosomal subunit. Forms a cluster with proteins L3 and L19. In the 70S ribosome, L14 and L19 interact and together make contacts with the 16S rRNA in bridges B5 and B8.

In terms of biological role, binds to 23S rRNA. Forms part of two intersubunit bridges in the 70S ribosome. The protein is Large ribosomal subunit protein uL14 of Campylobacter hominis (strain ATCC BAA-381 / DSM 21671 / CCUG 45161 / LMG 19568 / NCTC 13146 / CH001A).